Reading from the N-terminus, the 102-residue chain is Small ribosomal subunit protein eS24 (102 aa).

This sequence belongs to the eukaryotic ribosomal protein eS24 family.

The chain is Small ribosomal subunit protein eS24 from Methanococcoides burtonii (strain DSM 6242 / NBRC 107633 / OCM 468 / ACE-M).